A 618-amino-acid chain; its full sequence is Sulfite reductase [NADPH] flavoprotein alpha-component (618 aa).

The Flavodoxin-like domain maps to 64–202 (VTLISASQTG…QAQQWRQQVV (139 aa)). Residues 70-75 (SQTGNA), 117-120 (STQG), and 153-162 (LGDTSYEHFC) contribute to the FMN site. One can recognise an FAD-binding FR-type domain in the interval 253–467 (TAPLTAQLSV…IEHNDNFRLP (215 aa)). Residues threonine 341, lysine 375, 405-408 (RLYS), 423-425 (TVG), tyrosine 429, and 438-441 (GGAS) contribute to the FAD site. Residues 538–539 (SR), 544–548 (KIYVQ), and aspartate 580 each bind NADP(+). Position 618 (tyrosine 618) interacts with FAD.

This sequence belongs to the NADPH-dependent sulphite reductase flavoprotein subunit CysJ family. In the N-terminal section; belongs to the flavodoxin family. The protein in the C-terminal section; belongs to the flavoprotein pyridine nucleotide cytochrome reductase family. As to quaternary structure, alpha(8)-beta(8). The alpha component is a flavoprotein, the beta component is a hemoprotein. FAD is required as a cofactor. FMN serves as cofactor.

It catalyses the reaction hydrogen sulfide + 3 NADP(+) + 3 H2O = sulfite + 3 NADPH + 4 H(+). Its pathway is sulfur metabolism; hydrogen sulfide biosynthesis; hydrogen sulfide from sulfite (NADPH route): step 1/1. Functionally, component of the sulfite reductase complex that catalyzes the 6-electron reduction of sulfite to sulfide. This is one of several activities required for the biosynthesis of L-cysteine from sulfate. The flavoprotein component catalyzes the electron flow from NADPH -&gt; FAD -&gt; FMN to the hemoprotein component. The protein is Sulfite reductase [NADPH] flavoprotein alpha-component of Yersinia pseudotuberculosis serotype I (strain IP32953).